The following is a 165-amino-acid chain: Dihydrofolate reductase (165 aa).

The 163-residue stretch at 3–165 folds into the DHFR domain; sequence VVGLIWAQST…RYRLHSYHRS (163 aa). 7 to 9 contributes to the substrate binding site; the sequence is IWA. NADP(+)-binding positions include 8 to 9 and 16 to 21; these read WA and IGRDGG. Asp29 is a binding site for substrate. Position 45-48 (45-48) interacts with NADP(+); sequence GRRT. Arg62 contacts substrate. Residues 67–70 and 100–105 contribute to the NADP(+) site; these read LSRQ and IGGEQI. Thr119 serves as a coordination point for substrate.

The protein belongs to the dihydrofolate reductase family.

It catalyses the reaction (6S)-5,6,7,8-tetrahydrofolate + NADP(+) = 7,8-dihydrofolate + NADPH + H(+). It participates in cofactor biosynthesis; tetrahydrofolate biosynthesis; 5,6,7,8-tetrahydrofolate from 7,8-dihydrofolate: step 1/1. In terms of biological role, key enzyme in folate metabolism. Catalyzes an essential reaction for de novo glycine and purine synthesis, and for DNA precursor synthesis. The protein is Dihydrofolate reductase (folA) of Mycobacterium leprae (strain TN).